The chain runs to 238 residues: 7-cyano-7-deazaguanine synthase (238 aa).

Position 15–25 (15–25 (FSGGQDSTTCL)) interacts with ATP. Zn(2+) contacts are provided by Cys203, Cys218, Cys221, and Cys224.

It belongs to the QueC family. Zn(2+) is required as a cofactor.

The enzyme catalyses 7-carboxy-7-deazaguanine + NH4(+) + ATP = 7-cyano-7-deazaguanine + ADP + phosphate + H2O + H(+). The protein operates within purine metabolism; 7-cyano-7-deazaguanine biosynthesis. Functionally, catalyzes the ATP-dependent conversion of 7-carboxy-7-deazaguanine (CDG) to 7-cyano-7-deazaguanine (preQ(0)). This is 7-cyano-7-deazaguanine synthase from Alkalilimnicola ehrlichii (strain ATCC BAA-1101 / DSM 17681 / MLHE-1).